A 317-amino-acid chain; its full sequence is Secreted mono- and diacylglycerol lipase 3 (317 aa).

Residues 1-29 (MMFADDLVRMAVLRFITVALAAITNVANA) form the signal peptide. Residues Cys61 and Cys310 are joined by a disulfide bond. Asn108 carries an N-linked (GlcNAc...) asparagine glycan. Ser175 serves as the catalytic Nucleophile. A glycan (N-linked (GlcNAc...) asparagine) is linked at Asn194. Asp234 is an active-site residue. N-linked (GlcNAc...) asparagine glycosylation is present at Asn258. The active site involves His294.

The protein belongs to the AB hydrolase superfamily. Lipase family. Class 3 subfamily.

It localises to the secreted. The enzyme catalyses a monoacylglycerol + H2O = glycerol + a fatty acid + H(+). It carries out the reaction a diacylglycerol + H2O = a monoacylglycerol + a fatty acid + H(+). In terms of biological role, secreted mono- and diacylglycerol lipase involved in plant virulence. Has a substrate preference for p-nitrophenyl esters with a carbon chain length of C10 (p-nitrophenyl caprate). This chain is Secreted mono- and diacylglycerol lipase 3, found in Gibberella zeae (strain ATCC MYA-4620 / CBS 123657 / FGSC 9075 / NRRL 31084 / PH-1) (Wheat head blight fungus).